We begin with the raw amino-acid sequence, 715 residues long: Lanosterol synthase erg7B (715 aa).

The stretch at 111-153 (AIEIKNYLMARANPVDGGWGLHSEGDSSVFGTSLNYTVLRLLG) is one PFTB 1 repeat. The active-site Proton donor is the aspartate 445. 2 PFTB repeats span residues 550-590 (IQRG…RSAG) and 599-640 (VRRG…VVQT).

This sequence belongs to the terpene cyclase/mutase family.

It localises to the lipid droplet. The protein localises to the endoplasmic reticulum membrane. The enzyme catalyses (S)-2,3-epoxysqualene = lanosterol. Its pathway is steroid metabolism; ergosterol biosynthesis. Lanosterol synthase; part of the third module of ergosterol biosynthesis pathway that includes the late steps of the pathway. ERG7A and ERG7B catalyze the cyclization of (S)-2,3 oxidosqualene to lanosterol, a reaction that forms the sterol core. The third module or late pathway involves the ergosterol synthesis itself through consecutive reactions that mainly occur in the endoplasmic reticulum (ER) membrane. Firstly, the squalene synthase erg9 catalyzes the condensation of 2 farnesyl pyrophosphate moieties to form squalene, which is the precursor of all steroids. Squalene synthase is crucial for balancing the incorporation of farnesyl diphosphate (FPP) into sterol and nonsterol isoprene synthesis. Secondly, squalene is converted into lanosterol by the consecutive action of the squalene epoxidase erg1 and the lanosterol synthase erg7. Then, the delta(24)-sterol C-methyltransferase erg6 methylates lanosterol at C-24 to produce eburicol. Eburicol is the substrate of the sterol 14-alpha demethylase encoded by cyp51A and cyp51B, to yield 4,4,24-trimethyl ergosta-8,14,24(28)-trienol. The C-14 reductase erg24 then reduces the C14=C15 double bond which leads to 4,4-dimethylfecosterol. A sequence of further demethylations at C-4, involving the C-4 demethylation complex containing the C-4 methylsterol oxidases erg25A or erg25B, the sterol-4-alpha-carboxylate 3-dehydrogenase erg26 and the 3-keto-steroid reductase erg27, leads to the production of fecosterol via 4-methylfecosterol. The C-8 sterol isomerase erg2 then catalyzes the reaction which results in unsaturation at C-7 in the B ring of sterols and thus converts fecosterol to episterol. The sterol-C5-desaturase erg3B then catalyzes the introduction of a C-5 double bond in the B ring to produce 5-dehydroepisterol. The 2 other sterol-C5-desaturases, erg3A and erg3C, seem to be less important in ergosterol biosynthesis. The C-22 sterol desaturase erg5 further converts 5-dehydroepisterol into ergosta-5,7,22,24(28)-tetraen-3beta-ol by forming the C-22(23) double bond in the sterol side chain. Finally, ergosta-5,7,22,24(28)-tetraen-3beta-ol is substrate of the C-24(28) sterol reductases erg4A and erg4B to produce ergosterol. Possible alternative sterol biosynthetic pathways might exist from fecosterol to ergosterol, depending on the activities of the erg3 isoforms. In Aspergillus fumigatus (strain ATCC MYA-4609 / CBS 101355 / FGSC A1100 / Af293) (Neosartorya fumigata), this protein is Lanosterol synthase erg7B.